The primary structure comprises 382 residues: Sialidase (382 aa).

R37 serves as a coordination point for substrate. C42 and C103 are oxidised to a cystine. D62 functions as the Proton acceptor in the catalytic mechanism. BNR repeat units lie at residues 71–82 (ARSTDGGKTWNK), 145–156 (YKSTDDGVTFSK), and 210–220 (IYSTDGITWSL). A substrate-binding site is contributed by R246. A BNR 4 repeat occupies 254-265 (FETKDFGKTWTE). Residue R309 coordinates substrate. Y342 functions as the Nucleophile in the catalytic mechanism. E361 is a catalytic residue.

It belongs to the glycosyl hydrolase 33 family. Monomer.

The catalysed reaction is Hydrolysis of alpha-(2-&gt;3)-, alpha-(2-&gt;6)-, alpha-(2-&gt;8)- glycosidic linkages of terminal sialic acid residues in oligosaccharides, glycoproteins, glycolipids, colominic acid and synthetic substrates.. Functionally, cleaves the terminal sialic acid (N-acetyl neuraminic acid) from carbohydrate chains in glycoproteins providing free sialic acid which can be used as carbon and energy sources. Sialidases have been suggested to be pathogenic factors in microbial infections. The chain is Sialidase (nanH) from Salmonella typhimurium (strain LT2 / SGSC1412 / ATCC 700720).